The following is a 137-amino-acid chain: Transcription antitermination protein NusB (137 aa).

It belongs to the NusB family.

Functionally, involved in transcription antitermination. Required for transcription of ribosomal RNA (rRNA) genes. Binds specifically to the boxA antiterminator sequence of the ribosomal RNA (rrn) operons. This Finegoldia magna (strain ATCC 29328 / DSM 20472 / WAL 2508) (Peptostreptococcus magnus) protein is Transcription antitermination protein NusB.